The chain runs to 406 residues: MIQLRQLSDVIVKDKVVLLRLDLNIPQEGGKITDNTRIVRTIPTIKYLILHGAKVVIISHLGNPKGRIELTLSLRSVVTELEALLNIKVQFCPESIGSTPKNAIIKMKAGEVLLLENLRFNSGEELNDATFVNELSSLGDIYVNDAFSCSHRKHASICGLPAKLPSAAGFLLLSELKHLTSIFSNANKPFTVIIGGAKMSTKLDLLNSLITKADYLIVAGAMANIFLAMKRFNIGASLYKPELVNVASLILKKATSTNCKIILPFDAVIQNFNSNNITIIELNSSLVMQSNAKIMDIGPKTIAQIINIIKISKTIVWNGPVGAFEQLPFDHGSTYLSKAIAEKTRTGSLCSVAGGGDTISAIKKSGVIDDFSYISTGGGAFLEWLQGKTLPGVEALMQKLDTAKYI.

Substrate is bound by residues 22-24 (DLN), Arg37, 60-63 (HLGN), Arg119, and Arg152. ATP contacts are provided by residues Lys202, Glu325, and 355-358 (GGDT).

This sequence belongs to the phosphoglycerate kinase family. In terms of assembly, monomer.

Its subcellular location is the cytoplasm. The catalysed reaction is (2R)-3-phosphoglycerate + ATP = (2R)-3-phospho-glyceroyl phosphate + ADP. Its pathway is carbohydrate degradation; glycolysis; pyruvate from D-glyceraldehyde 3-phosphate: step 2/5. This is Phosphoglycerate kinase from Orientia tsutsugamushi (strain Ikeda) (Rickettsia tsutsugamushi).